The following is a 431-amino-acid chain: Putative serine/threonine-protein kinase B (431 aa).

One can recognise a Protein kinase domain in the interval 20–279; sequence YLNKGIVGLG…VRENFQIPYI (260 aa). ATP-binding positions include 26-34 and lysine 49; that span reads VGLGSYGEG. The Proton acceptor role is filled by aspartate 147. A PH domain is found at 331–429; the sequence is DVTHRGHVNK…WVHAIQRGIG (99 aa).

This sequence belongs to the protein kinase superfamily. Ser/Thr protein kinase family.

It catalyses the reaction L-seryl-[protein] + ATP = O-phospho-L-seryl-[protein] + ADP + H(+). The catalysed reaction is L-threonyl-[protein] + ATP = O-phospho-L-threonyl-[protein] + ADP + H(+). The chain is Putative serine/threonine-protein kinase B (NRKB) from Trypanosoma brucei brucei.